Reading from the N-terminus, the 350-residue chain is Small ribosomal subunit biogenesis GTPase RsgA (350 aa).

The span at 1-17 (MSKNKLSKGQQRRVNAN) shows a compositional bias: polar residues. Positions 1 to 33 (MSKNKLSKGQQRRVNANHQRRLKTSKEKPDYDD) are disordered. The 170-residue stretch at 104 to 273 (TSVLTRPDFY…VIDSPGVREF (170 aa)) folds into the CP-type G domain. Residues 160-163 (NKID) and 214-222 (GQSGVGKSS) contribute to the GTP site. 4 residues coordinate Zn(2+): cysteine 297, cysteine 302, histidine 304, and cysteine 310.

The protein belongs to the TRAFAC class YlqF/YawG GTPase family. RsgA subfamily. As to quaternary structure, monomer. Associates with 30S ribosomal subunit, binds 16S rRNA. Requires Zn(2+) as cofactor.

Its subcellular location is the cytoplasm. Its function is as follows. One of several proteins that assist in the late maturation steps of the functional core of the 30S ribosomal subunit. Helps release RbfA from mature subunits. May play a role in the assembly of ribosomal proteins into the subunit. Circularly permuted GTPase that catalyzes slow GTP hydrolysis, GTPase activity is stimulated by the 30S ribosomal subunit. The chain is Small ribosomal subunit biogenesis GTPase RsgA from Escherichia fergusonii (strain ATCC 35469 / DSM 13698 / CCUG 18766 / IAM 14443 / JCM 21226 / LMG 7866 / NBRC 102419 / NCTC 12128 / CDC 0568-73).